A 300-amino-acid polypeptide reads, in one-letter code: Acetyl-coenzyme A carboxylase carboxyl transferase subunit beta 1 (300 aa).

One can recognise a CoA carboxyltransferase N-terminal domain in the interval 26-294 (MWVKCPSCGD…HTSAAQHVPA (269 aa)). C30, C33, C49, and C51 together coordinate Zn(2+). A C4-type zinc finger spans residues 30–51 (CPSCGDLIYTRQFSDNLKVCKC).

It belongs to the AccD/PCCB family. As to quaternary structure, acetyl-CoA carboxylase is a heterohexamer composed of biotin carboxyl carrier protein (AccB), biotin carboxylase (AccC) and two subunits each of ACCase subunit alpha (AccA) and ACCase subunit beta (AccD). Zn(2+) serves as cofactor.

It localises to the cytoplasm. The enzyme catalyses N(6)-carboxybiotinyl-L-lysyl-[protein] + acetyl-CoA = N(6)-biotinyl-L-lysyl-[protein] + malonyl-CoA. It functions in the pathway lipid metabolism; malonyl-CoA biosynthesis; malonyl-CoA from acetyl-CoA: step 1/1. In terms of biological role, component of the acetyl coenzyme A carboxylase (ACC) complex. Biotin carboxylase (BC) catalyzes the carboxylation of biotin on its carrier protein (BCCP) and then the CO(2) group is transferred by the transcarboxylase to acetyl-CoA to form malonyl-CoA. The protein is Acetyl-coenzyme A carboxylase carboxyl transferase subunit beta 1 of Roseiflexus sp. (strain RS-1).